Here is a 103-residue protein sequence, read N- to C-terminus: Large ribosomal subunit protein uL24 (103 aa).

Belongs to the universal ribosomal protein uL24 family. In terms of assembly, part of the 50S ribosomal subunit.

Its function is as follows. One of two assembly initiator proteins, it binds directly to the 5'-end of the 23S rRNA, where it nucleates assembly of the 50S subunit. One of the proteins that surrounds the polypeptide exit tunnel on the outside of the subunit. The polypeptide is Large ribosomal subunit protein uL24 (Brucella ovis (strain ATCC 25840 / 63/290 / NCTC 10512)).